Consider the following 282-residue polypeptide: Cytochrome c1 (282 aa).

Residues 1 to 24 form the signal peptide; the sequence is MTIKLRFVASLALVFGLAAASVPA. Residues cysteine 62, cysteine 65, histidine 66, and methionine 207 each coordinate heme c. The helical transmembrane segment at 253 to 273 threads the bilayer; sequence WWVLGFLVIFTGLLVATKIVV.

The main subunits of complex b-c1 are: cytochrome b, cytochrome c1 and the Rieske protein. In terms of processing, binds 1 heme c group covalently per subunit.

Its subcellular location is the cell membrane. Component of the ubiquinol-cytochrome c reductase complex (complex III or cytochrome b-c1 complex), which is a respiratory chain that generates an electrochemical potential coupled to ATP synthesis. c1 functions as an electron donor to cytochrome c. This chain is Cytochrome c1 (petC), found in Blastochloris viridis (Rhodopseudomonas viridis).